A 233-amino-acid polypeptide reads, in one-letter code: Preflagellin peptidase (233 aa).

Position 1 (Met-1) is a topological domain, cytoplasmic. Residues 2–18 (IAYAIGLLGLLIASIQD) form a helical membrane-spanning segment. Topologically, residues 19–23 (IKSRE) are extracellular. A helical membrane pass occupies residues 24–46 (IENYIWIGMAVIGLLLSTYLSFT). The Cytoplasmic segment spans residues 47-49 (TGN). A helical transmembrane segment spans residues 50 to 72 (FMPIISSISGFIICFIIGYLMFV). Over 73–78 (LGIGGA) the chain is Extracellular. The chain crosses the membrane as a helical span at residues 79-89 (DGKILMGMGAL). The Cytoplasmic segment spans residues 90–110 (IPSYAFPVYSSLQPLYTMEYI). The chain crosses the membrane as a helical span at residues 111–139 (PWFPLLVFFNGVILMIVLPIYLFFKNLSN). The Extracellular portion of the chain corresponds to 140-207 (GVKPKKLKEY…QYVWATPELP (68 aa)). A helical transmembrane segment spans residues 208–219 (LLVPIALSYIIT). Residues 220–233 (PFLGDKILSIILPM) lie on the Cytoplasmic side of the membrane.

It belongs to the peptidase A24 family. Archaeal preflagellin peptidase subfamily.

It localises to the cell membrane. It carries out the reaction Cleaves the signal peptide of 3 to 12 amino acids from the N-terminal of preflagellin, usually at Arg-Gly-|- or Lys-Gly-|-, to release flagellin.. Its function is as follows. Cleaves the N-terminal leader peptide from preflagellins. The processing of preflagellins is necessary for assembly of flagellins into a flagellum structure. The protein is Preflagellin peptidase (flaK) of Methanococcus voltae.